Here is a 173-residue protein sequence, read N- to C-terminus: Large ribosomal subunit protein bL17 (173 aa).

The disordered stretch occupies residues 136 to 173; the sequence is AEEEAPAVEAEATEATEAPVEEAAAVEAEAPADAEKAE. Residues 138 to 149 show a composition bias toward acidic residues; the sequence is EEAPAVEAEATE. The span at 150–166 shows a compositional bias: low complexity; it reads ATEAPVEEAAAVEAEAP.

Belongs to the bacterial ribosomal protein bL17 family. Part of the 50S ribosomal subunit. Contacts protein L32.

This is Large ribosomal subunit protein bL17 from Bifidobacterium longum subsp. infantis (strain ATCC 15697 / DSM 20088 / JCM 1222 / NCTC 11817 / S12).